Consider the following 231-residue polypeptide: Large ribosomal subunit protein uL1 (231 aa).

The protein belongs to the universal ribosomal protein uL1 family. As to quaternary structure, part of the 50S ribosomal subunit.

Functionally, binds directly to 23S rRNA. The L1 stalk is quite mobile in the ribosome, and is involved in E site tRNA release. Protein L1 is also a translational repressor protein, it controls the translation of the L11 operon by binding to its mRNA. This Legionella pneumophila (strain Paris) protein is Large ribosomal subunit protein uL1.